The primary structure comprises 236 residues: DNA repair protein RecO (236 aa).

This sequence belongs to the RecO family.

Functionally, involved in DNA repair and RecF pathway recombination. The protein is DNA repair protein RecO of Rickettsia typhi (strain ATCC VR-144 / Wilmington).